We begin with the raw amino-acid sequence, 296 residues long: MSAANPETPNSTISREANTQSSSAATSQGYVLPEGKIMPNTVFVGGIDVRMDETEIRGFFARYGSVKEVKIITDRTGVSKGYGFVSFFNDVDVQKIVESQINFHGKKLKLGPAIRKQNLCAYHVQPRPLVFNHPPPPQFQNVWSNPNTETYMHPPTTMNPVTQYVQAYPPYPNSPVQVITGYQLPVYNYQMPPQWPVGEQRSYVVPPAYSSVNYYCNEIDPGAEVVPNECSVCEATPPSGNGPQKKSVDRSIQTVVSCLFNPENSRLRNSVVTQDDYFRDKRVHHFRRSRAVLKSV.

The segment covering M1–N18 has biased composition (polar residues). The interval M1–A25 is disordered. In terms of domain architecture, RRM spans N40–R115. The homodimerization stretch occupies residues K80–N132. Residues A167 to Q190 form the DAZ domain. Y277 is modified (phosphotyrosine).

Belongs to the RRM DAZ family. As to quaternary structure, homodimer and heterodimer. Forms a heterodimer with DAZ. Interacts with BOLL, DAZAP1 and DAZAP2. Interacts with PUM2 Multiple DAZL RRMs can bind to a single RNA containing multiple GUU triplets. Testis specific.

Its subcellular location is the cytoplasm. The protein resides in the nucleus. Functionally, RNA-binding protein, which is essential for gametogenesis in both males and females. Plays a central role during spermatogenesis. Acts by binding to the 3'-UTR of mRNA, specifically recognizing GUU triplets, and thereby regulating the translation of key transcripts. This Callithrix jacchus (White-tufted-ear marmoset) protein is Deleted in azoospermia-like (DAZL).